Reading from the N-terminus, the 469-residue chain is MVENFSEWFHDILEEANITDSRYPIKGMAVWMPYGFQIRKYTTNLIKEVYDRDHEEVLFPLLVPEAELAKEGLHVKGFEDEVYWVTHGGKTQLNEKLALRPTSETSIYPMYSLWIRSHIDLPLKYYQIVNTFRYETKHTRPLIRVREITTFKEAHTAHASKEEADIQVQEHIENYKEIFDTLGIPYTLTKRPEWDKFPGADYTMAFDAIMPDGKTLQIGTIHNLGQTFAKTFDITFEDKDGEHKLVYQTCAGLSDRVIASAIGIHGDEKGLRLPPEISPKQITIIPILFKKGKEEVLAKCEELKKEFEAAGLRVNIDNRDIRPGKKFYDWELKGTPIKLELGPRDLENNKTIAMRRDQLEKIELDLDENLVSNVIRLIDELNENLAESAKEFHTDHIKFASDIDEVRKLIEEGNVVAVNWCGDTDCGEKIEEITGYSVLGIYEELEEAGKKCILSDEDAKYVALIAKTY.

Belongs to the class-II aminoacyl-tRNA synthetase family. ProS type 3 subfamily. Homodimer.

Its subcellular location is the cytoplasm. It carries out the reaction tRNA(Pro) + L-proline + ATP = L-prolyl-tRNA(Pro) + AMP + diphosphate. Catalyzes the attachment of proline to tRNA(Pro) in a two-step reaction: proline is first activated by ATP to form Pro-AMP and then transferred to the acceptor end of tRNA(Pro). The sequence is that of Proline--tRNA ligase from Methanobrevibacter smithii (strain ATCC 35061 / DSM 861 / OCM 144 / PS).